A 484-amino-acid polypeptide reads, in one-letter code: 1,3-beta-glucanosyltransferase GAS5 (484 aa).

The first 19 residues, 1 to 19 (MLLRSLTSAFVLSAGLAQA), serve as a signal peptide directing secretion. Residues asparagine 24 and asparagine 60 are each glycosylated (N-linked (GlcNAc...) asparagine). A disulfide bond links cysteine 71 and cysteine 100. (1,3-beta-D-glucosyl)n contacts are provided by tyrosine 89, asparagine 159, and glutamate 160. Glutamate 160 acts as the Proton donor in catalysis. A glycan (N-linked (GlcNAc...) asparagine) is linked at asparagine 166. Residues aspartate 201 and arginine 206 each contribute to the (1,3-beta-D-glucosyl)n site. 2 cysteine pairs are disulfide-bonded: cysteine 215–cysteine 348 and cysteine 234–cysteine 265. The active-site Nucleophile is glutamate 262. Tyrosine 295 provides a ligand contact to (1,3-beta-D-glucosyl)n. N-linked (GlcNAc...) asparagine glycosylation is found at asparagine 299, asparagine 344, and asparagine 359. Positions 383 to 462 (TGIATQQSCD…SSQSSSKSKG (80 aa)) are disordered. Acidic residues predominate over residues 394-404 (KDDDDEEDDDT). Positions 405 to 462 (SSSSSSSSSSSSSASSSSESSSSTSKASSSSPSASETSLLKSAASATSSSQSSSKSKG) are enriched in low complexity. Glycine 462 is lipidated: GPI-anchor amidated glycine. Residues 463-484 (AAGIIEIPLIFRALAELYNLVL) constitute a propeptide, removed in mature form.

The protein belongs to the glycosyl hydrolase 72 family. In terms of processing, the GPI-anchor is attached to the protein in the endoplasmic reticulum and serves to target the protein to the cell surface. There, the glucosamine-inositol phospholipid moiety is cleaved off and the GPI-modified mannoprotein is covalently attached via its lipidless GPI glycan remnant to the 1,6-beta-glucan of the outer cell wall layer.

It is found in the secreted. It localises to the cell wall. Its subcellular location is the membrane. Functionally, splits internally a 1,3-beta-glucan molecule and transfers the newly generated reducing end (the donor) to the non-reducing end of another 1,3-beta-glucan molecule (the acceptor) forming a 1,3-beta linkage, resulting in the elongation of 1,3-beta-glucan chains in the cell wall. Involved in cell wall biosynthesis and morphogenesis. The polypeptide is 1,3-beta-glucanosyltransferase GAS5 (GAS5) (Saccharomyces cerevisiae (strain ATCC 204508 / S288c) (Baker's yeast)).